Consider the following 278-residue polypeptide: Fe(II)/2-oxoglutarate-dependent dioxygenase nvfI (278 aa).

It belongs to the asaB hydroxylase/desaturase family.

It carries out the reaction asnovolin A + 2-oxoglutarate + 2 O2 = fumigatonoid A + succinate + CO2. It functions in the pathway secondary metabolite biosynthesis; terpenoid biosynthesis. In terms of biological role, fe(II)/2-oxoglutarate-dependent dioxygenase; part of the gene cluster that mediates the biosynthesis of novofumigatonin, a heavily oxygenated meroterpenoid containing a unique orthoester moiety. The first step of the pathway is the synthesis of 3,5-dimethylorsellinic acid (DMOA) by the polyketide synthase nvfA via condensation of one acetyl-CoA starter unit with 3 malonyl-CoA units and 2 methylations. DMOA is then converted to farnesyl-DMOA by the farnesyltransferase nvfB. Epoxydation by FAD-dependent monooxygenase nvfK, followed by a protonation-initiated cyclization catalyzed by the terpene cyclase nvfL leads to the production of asnavolin H. The short chain dehydrogenase nvfC then as a 3-OH dehydrogenase of asnovolin H to yield chemesin D. There are two branches to synthesize asnovolin A from chemesin D. In one branch, chemesin D undergoes Baeyer-Villiger oxidation by nvfH, methylation by nvfJ, and enoyl reduction by the nvfM D enoylreductase that reduces the double bond between C-5'and C-6', to form respectively asnovolin I, asnovolin K, and asnovolin A. In the other branch, the methylation precedes the Baeyer-Villiger oxidation and the enoyl reduction to yield asnovolin A via the asnovolin J intermediate. Asnovolin A is further converted to fumigatonoid A by the Fe(II)/2-oxoglutarate-dependent dioxygenase nvfI that catalyzes an endoperoxidation reaction. The alpha/beta hydrolase nvfD then acts as an epimerase that converts fumigatonoid A to its C-5' epimer, which then undergoes spontaneous or nvfD-catalyzed lactonization. The following step utilizes the ketoreductase nvfG to produce fumigatonoid B. The dioxygenase nvfE further converts fumigatonoid B into fumigatonoid C. Finally the Fe(II)/2-oxoglutarate-dependent dioxygenase nvfF catalyzes two rounds of oxidation to transform fumigatonoid C into the end product, novofumigatonin A. The sequence is that of Fe(II)/2-oxoglutarate-dependent dioxygenase nvfI from Aspergillus novofumigatus (strain IBT 16806).